Consider the following 239-residue polypeptide: Probable inner membrane transporter protein TsaS (239 aa).

The next 4 membrane-spanning stretches (helical) occupy residues Ala-65 to Gly-85, Gly-128 to Leu-148, Ala-160 to Ala-180, and Ala-186 to Gly-206.

It belongs to the 4-toluene sulfonate uptake permease (TSUP) (TC 2.A.102) family. As to quaternary structure, part of a two-component transport system composed of TsaT and TsaS.

It is found in the cell inner membrane. Functionally, involved in the uptake of p-toluenesulphonate (TSA). The chain is Probable inner membrane transporter protein TsaS (tsaS) from Comamonas testosteroni (Pseudomonas testosteroni).